The primary structure comprises 495 residues: Ubiquinone biosynthesis monooxygenase COQ6, mitochondrial (495 aa).

The protein belongs to the UbiH/COQ6 family. In terms of assembly, component of a multi-subunit COQ enzyme complex. Requires FAD as cofactor.

Its subcellular location is the mitochondrion inner membrane. The catalysed reaction is a 4-hydroxy-3-(all-trans-polyprenyl)benzoate + 2 reduced [2Fe-2S]-[ferredoxin] + O2 + 2 H(+) = a 3,4-dihydroxy-5-(all-trans-polyprenyl)benzoate + 2 oxidized [2Fe-2S]-[ferredoxin] + H2O. The enzyme catalyses a 2-methoxy-6-(all-trans-polyprenyl)phenol + 2 reduced [2Fe-2S]-[ferredoxin] + O2 + 2 H(+) = a 2-methoxy-6-(all-trans-polyprenyl)benzene-1,4-diol + 2 oxidized [2Fe-2S]-[ferredoxin] + H2O. It functions in the pathway cofactor biosynthesis; ubiquinone biosynthesis. FAD-dependent monooxygenase required for two non-consecutive steps during ubiquinone biosynthesis. Required for the C5-ring hydroxylation during ubiquinone biosynthesis by catalyzing the hydroxylation of 4-hydroxy-3-(all-trans-polyprenyl)benzoic acid to 3,4-dihydroxy-5-(all-trans-polyprenyl)benzoic acid. Also acts downstream of coq4, for the C1-hydroxylation during ubiquinone biosynthesis by catalyzing the hydroxylation of 2-methoxy-6-(all-trans-polyprenyl)phenol to 2-methoxy-6-(all-trans-polyprenyl)benzene-1,4-diol. The electrons required for the hydroxylation reaction are funneled indirectly to coq6 from NADPH via a ferredoxin/ferredoxin reductase system. This is Ubiquinone biosynthesis monooxygenase COQ6, mitochondrial from Dictyostelium discoideum (Social amoeba).